The sequence spans 314 residues: Putative lipoprotein LppW (314 aa).

The signal sequence occupies residues 1-22 (MRARPLTLLTALAAVTLVVVAG). Cys-23 carries N-palmitoyl cysteine lipidation. Cys-23 is lipidated: S-diacylglycerol cysteine.

It is found in the cell membrane. This is Putative lipoprotein LppW (lppW) from Mycobacterium bovis (strain ATCC BAA-935 / AF2122/97).